We begin with the raw amino-acid sequence, 325 residues long: Pyruvate dehydrogenase E1 component subunit beta (325 aa).

Glu-60 lines the thiamine diphosphate pocket.

In terms of assembly, heterodimer of an alpha and a beta chain. Thiamine diphosphate is required as a cofactor.

The enzyme catalyses N(6)-[(R)-lipoyl]-L-lysyl-[protein] + pyruvate + H(+) = N(6)-[(R)-S(8)-acetyldihydrolipoyl]-L-lysyl-[protein] + CO2. Functionally, the pyruvate dehydrogenase complex catalyzes the overall conversion of pyruvate to acetyl-CoA and CO(2). It contains multiple copies of three enzymatic components: pyruvate dehydrogenase (E1), dihydrolipoamide acetyltransferase (E2) and lipoamide dehydrogenase (E3). The protein is Pyruvate dehydrogenase E1 component subunit beta (pdhB) of Staphylococcus epidermidis (strain ATCC 35984 / DSM 28319 / BCRC 17069 / CCUG 31568 / BM 3577 / RP62A).